We begin with the raw amino-acid sequence, 87 residues long: Cytochrome c5 (87 aa).

Residues Cys-19, Cys-22, His-23, and Met-63 each contribute to the heme site. A disulfide bridge connects residues Cys-69 and Cys-72.

It belongs to the cytochrome c family. Homodimer. In terms of processing, binds 1 heme group per subunit.

Its function is as follows. It is unreactive with cytochrome c reductase or oxidase but seems to function as an intermediate in nitrate respiration of facultative anaerobic pseudmonads. This chain is Cytochrome c5, found in Ectopseudomonas mendocina (Pseudomonas mendocina).